Consider the following 438-residue polypeptide: GTPase Obg (438 aa).

In terms of domain architecture, Obg spans 2 to 160 (NMFVDQIKIE…HYLELELKML (159 aa)). One can recognise an OBG-type G domain in the interval 161 to 337 (ADVGLIGFPS…LMQLTADLLD (177 aa)). GTP contacts are provided by residues 167 to 174 (GFPSVGKS), 192 to 196 (FTTLT), 214 to 217 (DMPG), 284 to 287 (TKMD), and 318 to 320 (SAV). Mg(2+)-binding residues include serine 174 and threonine 194. An OCT domain is found at 360–438 (PDKKDEADFT…IEKFVFEFIQ (79 aa)).

Belongs to the TRAFAC class OBG-HflX-like GTPase superfamily. OBG GTPase family. Monomer. Requires Mg(2+) as cofactor.

The protein localises to the cytoplasm. Functionally, an essential GTPase which binds GTP, GDP and possibly (p)ppGpp with moderate affinity, with high nucleotide exchange rates and a fairly low GTP hydrolysis rate. Plays a role in control of the cell cycle, stress response, ribosome biogenesis and in those bacteria that undergo differentiation, in morphogenesis control. This is GTPase Obg from Limosilactobacillus reuteri (strain DSM 20016) (Lactobacillus reuteri).